We begin with the raw amino-acid sequence, 406 residues long: Tryptophan synthase beta chain (406 aa).

Lys99 carries the post-translational modification N6-(pyridoxal phosphate)lysine.

It belongs to the TrpB family. Tetramer of two alpha and two beta chains. The cofactor is pyridoxal 5'-phosphate.

The catalysed reaction is (1S,2R)-1-C-(indol-3-yl)glycerol 3-phosphate + L-serine = D-glyceraldehyde 3-phosphate + L-tryptophan + H2O. It functions in the pathway amino-acid biosynthesis; L-tryptophan biosynthesis; L-tryptophan from chorismate: step 5/5. Functionally, the beta subunit is responsible for the synthesis of L-tryptophan from indole and L-serine. This chain is Tryptophan synthase beta chain, found in Rhizobium leguminosarum bv. trifolii (strain WSM2304).